The sequence spans 878 residues: Pyruvate, phosphate dikinase (878 aa).

An N-terminal region spans residues 1-347 (MKKLIYYFGS…LYILQTRTAK (347 aa)). Arg96 is a binding site for ATP. Residues 348 to 404 (RTAIAAINIAVQMVEEKLISKEQALMRIDPESLNQLLHTRIDYSKGLTSIAEGLPAS) are linker 1. Residues 405-502 (PGAATGIAVF…VIKQGDIITI (98 aa)) are central. A Phosphothreonine; by PDRP1 modification is found at Thr457. His459 serves as the catalytic Tele-phosphohistidine intermediate. The linker 2 stretch occupies residues 503–537 (DGGSGKIFLGEMPLIQPTFSEESKLILDWADEISS). A C-terminal region spans residues 538–878 (LKVRANAETV…AAAQAKIKHG (341 aa)). Residues Arg565, Arg621, Glu749, Gly770, Thr771, Asn772, and Asp773 each coordinate substrate. Glu749 contributes to the Mg(2+) binding site. A Mg(2+)-binding site is contributed by Asp773. Cys835 functions as the Proton donor in the catalytic mechanism.

It belongs to the PEP-utilizing enzyme family. In terms of assembly, homodimer. It depends on Mg(2+) as a cofactor. Phosphorylation of Thr-457 in the dark inactivates the enzyme. Dephosphorylation upon light stimulation reactivates the enzyme.

The enzyme catalyses pyruvate + phosphate + ATP = phosphoenolpyruvate + AMP + diphosphate + H(+). Its activity is regulated as follows. Activated by light-induced dephosphorylation. Inhibited by dark-induced phosphorylation. Both reactions are catalyzed by PDRP1. Its function is as follows. Catalyzes the reversible phosphorylation of pyruvate and phosphate. In Rickettsia conorii (strain ATCC VR-613 / Malish 7), this protein is Pyruvate, phosphate dikinase (ppdK).